Reading from the N-terminus, the 111-residue chain is UPF0339 protein in ptx operon 5'region (111 aa).

2 tandem repeats follow at residues 10–58 (DKAG…RYER) and 61–109 (SGAD…VVEV).

This sequence belongs to the UPF0339 family. Duplicated subfamily.

This is UPF0339 protein in ptx operon 5'region from Stutzerimonas stutzeri (Pseudomonas stutzeri).